The chain runs to 241 residues: Probable transcriptional regulatory protein Mpe_A1337 (241 aa).

Residues 1–20 form a disordered region; the sequence is MAGHSKWANIQHRKGRQDEK.

The protein belongs to the TACO1 family.

It localises to the cytoplasm. The polypeptide is Probable transcriptional regulatory protein Mpe_A1337 (Methylibium petroleiphilum (strain ATCC BAA-1232 / LMG 22953 / PM1)).